The chain runs to 317 residues: L-lactate dehydrogenase (317 aa).

Positions 16, 37, and 68 each coordinate NAD(+). Substrate contacts are provided by residues glutamine 85, arginine 91, 123-126 (NPCD), and 151-154 (DSAR). 121-123 (ASN) lines the NAD(+) pocket. Histidine 178 acts as the Proton acceptor in catalysis. At tyrosine 222 the chain carries Phosphotyrosine. Threonine 231 contributes to the substrate binding site.

Belongs to the LDH/MDH superfamily. LDH family. As to quaternary structure, homotetramer.

It is found in the cytoplasm. It carries out the reaction (S)-lactate + NAD(+) = pyruvate + NADH + H(+). It functions in the pathway fermentation; pyruvate fermentation to lactate; (S)-lactate from pyruvate: step 1/1. In terms of biological role, catalyzes the conversion of lactate to pyruvate. The chain is L-lactate dehydrogenase from Mesoplasma florum (strain ATCC 33453 / NBRC 100688 / NCTC 11704 / L1) (Acholeplasma florum).